The sequence spans 1073 residues: Semaphorin-6D (1073 aa).

A signal peptide spans 1–20 (MRVFLLCAYILLLMVSQLRA). Topologically, residues 21-662 (VSFPEDDEPL…GESNQMVHMN (642 aa)) are extracellular. A Sema domain is found at 27–512 (DEPLNTVDYH…FSSCIIRIPL (486 aa)). Asn-51 carries N-linked (GlcNAc...) asparagine glycosylation. Cystine bridges form between Cys-108–Cys-118, Cys-136–Cys-145, Cys-259–Cys-370, and Cys-284–Cys-329. The N-linked (GlcNAc...) asparagine glycan is linked to Asn-283. N-linked (GlcNAc...) asparagine glycosylation is found at Asn-435 and Asn-461. 4 cysteine pairs are disulfide-bonded: Cys-477/Cys-506, Cys-515/Cys-533, Cys-521/Cys-568, and Cys-525/Cys-541. A PSI domain is found at 514–569 (RCERYGSCKKSCIASRDPYCGWLSQGSCGRVTPGMLAEGYEQDTEFGNTAHLGDCH). Asn-631 is a glycosylation site (N-linked (GlcNAc...) asparagine). The chain crosses the membrane as a helical span at residues 663 to 683 (VLITCVFAAFVLGAFIAGVAV). Residues 684-1073 (YCYRDMFVRK…SVRPLNKYTY (390 aa)) are Cytoplasmic-facing. Phosphoserine occurs at positions 723, 734, and 744. Disordered regions lie at residues 744 to 775 (SRKE…PTPE), 787 to 825 (AMKS…GHIP), 839 to 874 (TSFS…RSVD), 914 to 1005 (SMSE…PTPT), and 1021 to 1073 (LQPS…KYTY). At Thr-773 the chain carries Phosphothreonine. Residues 790–805 (SHSEKAHGHGASRKET) show a composition bias toward basic and acidic residues. A phosphoserine mark is found at Ser-931, Ser-957, and Ser-983. The segment covering 931 to 942 (SPPSTLPRNSPT) has biased composition (polar residues). Polar residues-rich tracts occupy residues 980–995 (NLNS…QPSM) and 1021–1037 (LQPS…NGTL).

The protein belongs to the semaphorin family.

The protein localises to the cell membrane. It is found in the cytoplasm. Its function is as follows. Shows growth cone collapsing activity on dorsal root ganglion (DRG) neurons in vitro. May be a stop signal for the DRG neurons in their target areas, and possibly also for other neurons. May also be involved in the maintenance and remodeling of neuronal connections. Ligand of TREM2 with PLXNA1 as coreceptor in dendritic cells, plays a role in the generation of immune responses and skeletal homeostasis. This chain is Semaphorin-6D, found in Homo sapiens (Human).